The following is a 287-amino-acid chain: 33 kDa chaperonin (287 aa).

2 disulfides stabilise this stretch: C231/C233 and C264/C267.

The protein belongs to the HSP33 family. In terms of processing, under oxidizing conditions two disulfide bonds are formed involving the reactive cysteines. Under reducing conditions zinc is bound to the reactive cysteines and the protein is inactive.

The protein localises to the cytoplasm. In terms of biological role, redox regulated molecular chaperone. Protects both thermally unfolding and oxidatively damaged proteins from irreversible aggregation. Plays an important role in the bacterial defense system toward oxidative stress. This is 33 kDa chaperonin from Thermosipho melanesiensis (strain DSM 12029 / CIP 104789 / BI429).